The primary structure comprises 250 residues: tRNA (guanine-N(1)-)-methyltransferase (250 aa).

S-adenosyl-L-methionine-binding positions include Gly-116 and 136–141 (IGDYVL).

This sequence belongs to the RNA methyltransferase TrmD family. In terms of assembly, homodimer.

Its subcellular location is the cytoplasm. It carries out the reaction guanosine(37) in tRNA + S-adenosyl-L-methionine = N(1)-methylguanosine(37) in tRNA + S-adenosyl-L-homocysteine + H(+). In terms of biological role, specifically methylates guanosine-37 in various tRNAs. The sequence is that of tRNA (guanine-N(1)-)-methyltransferase from Pseudomonas putida (strain ATCC 47054 / DSM 6125 / CFBP 8728 / NCIMB 11950 / KT2440).